The primary structure comprises 227 residues: Endolytic peptidoglycan transglycosylase RlpA (227 aa).

A signal peptide spans 1-21 (MMNHKFVLLILLIFYCFFLSG). Cys22 carries the N-palmitoyl cysteine lipid modification. The S-diacylglycerol cysteine moiety is linked to residue Cys22.

Belongs to the RlpA family.

Its subcellular location is the cell membrane. In terms of biological role, lytic transglycosylase with a strong preference for naked glycan strands that lack stem peptides. The protein is Endolytic peptidoglycan transglycosylase RlpA of Rickettsia bellii (strain RML369-C).